Consider the following 469-residue polypeptide: MLCLCLYVPVHNSDQIEVEYFESNGLPSELKSLKSLSVLLPSQEFSTYRRWRKKSLKTEEKEHDGQLDFEEFVHYLQDHEKDLKLVFKSMDRKIAGQVNANDIVNSLRDLGVHISLKQAEKVLKSMDKNGTMTIDWNEWKKYPTLQPAENIPEIILYWKHSTIFDVGESLMVPDEFTVEEHLTGMWWRHLVSGGGAGAVSRTCTAPLDRLKVLMQVHGCQGKSMCLMSGLTQMIKEGGVRSLWRGNGINVIKIAPETALKFMAYEQIKRVMGSSQETLGISERFVAGSLAGVIAQSTIYPMEVLKTRLALRKTGQYKGISDCAKHILKTEGMSAFYKGYVPNMLGIIPYAGIDLAVYETLKNTWLQRYGTENADPGVFVLLACGTVSSTCGQLASYPLALIRTRMQAQASVEGSSQVSMTGLFKQIMKTEGPTGLYRGLTPNFLKVIPAVSISYVVYEHIKSTLGVRSR.

Residues 1–189 (MLCLCLYVPV…EHLTGMWWRH (189 aa)) lie on the Mitochondrial intermembrane side of the membrane. EF-hand domains lie at 47–80 (TYRR…QDHE), 78–113 (DHEK…LGVH), and 114–149 (ISLK…QPAE). Residues aspartate 64, glutamine 66, and glutamate 71 each contribute to the Ca(2+) site. 3 Solcar repeats span residues 184–270 (GMWW…IKRV), 278–363 (LGIS…LKNT), and 375–463 (PGVF…IKST). Residues 190–207 (LVSGGGAGAVSRTCTAPL) form a helical membrane-spanning segment. The Mitochondrial matrix portion of the chain corresponds to 208-244 (DRLKVLMQVHGCQGKSMCLMSGLTQMIKEGGVRSLWR). A helical transmembrane segment spans residues 245 to 264 (GNGINVIKIAPETALKFMAY). The Mitochondrial intermembrane portion of the chain corresponds to 265–287 (EQIKRVMGSSQETLGISERFVAG). A helical membrane pass occupies residues 288-301 (SLAGVIAQSTIYPM). The Mitochondrial matrix segment spans residues 302–337 (EVLKTRLALRKTGQYKGISDCAKHILKTEGMSAFYK). The chain crosses the membrane as a helical span at residues 338–357 (GYVPNMLGIIPYAGIDLAVY). The Mitochondrial intermembrane portion of the chain corresponds to 358–380 (ETLKNTWLQRYGTENADPGVFVL). A helical membrane pass occupies residues 381-398 (LACGTVSSTCGQLASYPL). The Mitochondrial matrix segment spans residues 399–437 (ALIRTRMQAQASVEGSSQVSMTGLFKQIMKTEGPTGLYR). A helical membrane pass occupies residues 438 to 457 (GLTPNFLKVIPAVSISYVVY). Residues 458 to 469 (EHIKSTLGVRSR) lie on the Mitochondrial intermembrane side of the membrane.

Belongs to the mitochondrial carrier (TC 2.A.29) family.

Its subcellular location is the mitochondrion inner membrane. Calcium-dependent mitochondrial solute carrier. In Danio rerio (Zebrafish), this protein is Calcium-binding mitochondrial carrier protein SCaMC-2-A (slc25a25a).